The following is a 362-amino-acid chain: UPF0324 membrane protein YPO1307/y2878/YP_1285 (362 aa).

9 helical membrane passes run 21-38, 48-70, 102-124, 139-161, 168-190, 240-257, 278-300, 305-327, and 334-356; these read YIPGLVLTGVITGLALNV, GLGALTLAILFGIIVGNTLYPWL, VADVGATGMVIDLLTLSSTFILA, VMLIGAGSSICGAAAIMATEPVL, VAVAVATVVIFGTLAIFVYPWLY, MIRVMMLAPFLLLLSAYL, WFAVIFILMAGFNSLNLLPAVWV, TLDTILLAMAMAALGLTTHIGSI, and PLLLALLLFIWLLVGGTGINLFV.

Belongs to the UPF0324 family.

The protein resides in the cell membrane. This is UPF0324 membrane protein YPO1307/y2878/YP_1285 from Yersinia pestis.